Here is a 265-residue protein sequence, read N- to C-terminus: Small ribosomal subunit protein uS2 (265 aa).

Residues 226–265 are disordered; that stretch reads AAAPNSASVREEEFSAESADEGKGRRAPAKKGDKKADAAE. Residues 245–265 are compositionally biased toward basic and acidic residues; that stretch reads DEGKGRRAPAKKGDKKADAAE.

Belongs to the universal ribosomal protein uS2 family.

The polypeptide is Small ribosomal subunit protein uS2 (Xanthomonas euvesicatoria pv. vesicatoria (strain 85-10) (Xanthomonas campestris pv. vesicatoria)).